A 75-amino-acid polypeptide reads, in one-letter code: Conotoxin Vn5.6 (75 aa).

Positions 1–19 (MLCLPVFIILLLLASPAAP) are cleaved as a signal peptide. Positions 20 to 59 (NPLEKRIQSDLIRAALEDADMKTGEREILNIIDSISDVAK) are excised as a propeptide. The residue at position 60 (Q60) is a Pyrrolidone carboxylic acid.

It belongs to the conotoxin T superfamily. Contains 2 disulfide bonds that can be either 'C1-C3, C2-C4' or 'C1-C4, C2-C3', since these disulfide connectivities have been observed for conotoxins with cysteine framework V (for examples, see AC P0DQQ7 and AC P81755). Expressed by the venom duct.

It localises to the secreted. The chain is Conotoxin Vn5.6 from Conus ventricosus (Mediterranean cone).